The chain runs to 106 residues: Putative double-stranded DNA mimic protein VV1_3059 (106 aa).

This sequence belongs to the putative dsDNA mimic protein family.

Functionally, may act as a double-stranded DNA (dsDNA) mimic. Probably regulates the activity of a dsDNA-binding protein. The sequence is that of Putative double-stranded DNA mimic protein VV1_3059 from Vibrio vulnificus (strain CMCP6).